Here is a 346-residue protein sequence, read N- to C-terminus: tRNA N6-adenosine threonylcarbamoyltransferase (346 aa).

Histidine 111 and histidine 115 together coordinate Fe cation. Residues 134-138 (LVSGG), aspartate 167, glycine 180, and asparagine 279 contribute to the substrate site. Aspartate 307 is a Fe cation binding site.

This sequence belongs to the KAE1 / TsaD family. It depends on Fe(2+) as a cofactor.

It is found in the cytoplasm. It carries out the reaction L-threonylcarbamoyladenylate + adenosine(37) in tRNA = N(6)-L-threonylcarbamoyladenosine(37) in tRNA + AMP + H(+). Its function is as follows. Required for the formation of a threonylcarbamoyl group on adenosine at position 37 (t(6)A37) in tRNAs that read codons beginning with adenine. Is involved in the transfer of the threonylcarbamoyl moiety of threonylcarbamoyl-AMP (TC-AMP) to the N6 group of A37, together with TsaE and TsaB. TsaD likely plays a direct catalytic role in this reaction. The polypeptide is tRNA N6-adenosine threonylcarbamoyltransferase (Burkholderia multivorans (strain ATCC 17616 / 249)).